The following is a 198-amino-acid chain: Peptide deformylase (198 aa).

Fe cation-binding residues include cysteine 123 and histidine 170. Glutamate 171 is an active-site residue. Histidine 174 is a Fe cation binding site.

The protein belongs to the polypeptide deformylase family. Fe(2+) serves as cofactor.

The enzyme catalyses N-terminal N-formyl-L-methionyl-[peptide] + H2O = N-terminal L-methionyl-[peptide] + formate. Removes the formyl group from the N-terminal Met of newly synthesized proteins. Requires at least a dipeptide for an efficient rate of reaction. N-terminal L-methionine is a prerequisite for activity but the enzyme has broad specificity at other positions. This Mycoplasmopsis pulmonis (strain UAB CTIP) (Mycoplasma pulmonis) protein is Peptide deformylase.